Here is a 235-residue protein sequence, read N- to C-terminus: MPYPMQLGFQDATSPIMEELMYFHDHTLMIVFLISSLVLYIIILMLTTKLTHTSTMDAQEVETIWTILPAVILILIALPSLRILYMMDEIYNPYLTVKAMGHQWYWSYEFTDYENLMFDSYMIPTKDLSPGQLRLLEVDNRIVLPMELPIRMLISSEDVLHAWTMPSLGLKADAIPGRLNQITLTSSRPGVFYGQCSEICGSNHSFMPIVLEMASLKYFEKWSSMMQSFLSYLYI.

Residues 1–14 are Mitochondrial intermembrane-facing; it reads MPYPMQLGFQDATS. Residues 15-45 form a helical membrane-spanning segment; sequence PIMEELMYFHDHTLMIVFLISSLVLYIIILM. Over 46–59 the chain is Mitochondrial matrix; sequence LTTKLTHTSTMDAQ. The helical transmembrane segment at 60-87 threads the bilayer; that stretch reads EVETIWTILPAVILILIALPSLRILYMM. At 88 to 235 the chain is on the mitochondrial intermembrane side; it reads DEIYNPYLTV…MQSFLSYLYI (148 aa). Cu cation contacts are provided by His-161, Cys-196, Glu-198, Cys-200, His-204, and Met-207. Residue Glu-198 coordinates Mg(2+). Tyr-218 carries the post-translational modification Phosphotyrosine.

The protein belongs to the cytochrome c oxidase subunit 2 family. In terms of assembly, component of the cytochrome c oxidase (complex IV, CIV), a multisubunit enzyme composed of 14 subunits. The complex is composed of a catalytic core of 3 subunits MT-CO1, MT-CO2 and MT-CO3, encoded in the mitochondrial DNA, and 11 supernumerary subunits COX4I, COX5A, COX5B, COX6A, COX6B, COX6C, COX7A, COX7B, COX7C, COX8 and NDUFA4, which are encoded in the nuclear genome. The complex exists as a monomer or a dimer and forms supercomplexes (SCs) in the inner mitochondrial membrane with NADH-ubiquinone oxidoreductase (complex I, CI) and ubiquinol-cytochrome c oxidoreductase (cytochrome b-c1 complex, complex III, CIII), resulting in different assemblies (supercomplex SCI(1)III(2)IV(1) and megacomplex MCI(2)III(2)IV(2)). Found in a complex with TMEM177, COA6, COX18, COX20, SCO1 and SCO2. Interacts with TMEM177 in a COX20-dependent manner. Interacts with COX20. Interacts with COX16. Requires Cu cation as cofactor.

It is found in the mitochondrion inner membrane. It catalyses the reaction 4 Fe(II)-[cytochrome c] + O2 + 8 H(+)(in) = 4 Fe(III)-[cytochrome c] + 2 H2O + 4 H(+)(out). Functionally, component of the cytochrome c oxidase, the last enzyme in the mitochondrial electron transport chain which drives oxidative phosphorylation. The respiratory chain contains 3 multisubunit complexes succinate dehydrogenase (complex II, CII), ubiquinol-cytochrome c oxidoreductase (cytochrome b-c1 complex, complex III, CIII) and cytochrome c oxidase (complex IV, CIV), that cooperate to transfer electrons derived from NADH and succinate to molecular oxygen, creating an electrochemical gradient over the inner membrane that drives transmembrane transport and the ATP synthase. Cytochrome c oxidase is the component of the respiratory chain that catalyzes the reduction of oxygen to water. Electrons originating from reduced cytochrome c in the intermembrane space (IMS) are transferred via the dinuclear copper A center (CU(A)) of subunit 2 and heme A of subunit 1 to the active site in subunit 1, a binuclear center (BNC) formed by heme A3 and copper B (CU(B)). The BNC reduces molecular oxygen to 2 water molecules using 4 electrons from cytochrome c in the IMS and 4 protons from the mitochondrial matrix. The sequence is that of Cytochrome c oxidase subunit 2 (MT-CO2) from Didelphis virginiana (North American opossum).